A 112-amino-acid polypeptide reads, in one-letter code: Large ribosomal subunit protein uL22 (112 aa).

The protein belongs to the universal ribosomal protein uL22 family. As to quaternary structure, part of the 50S ribosomal subunit.

Its function is as follows. This protein binds specifically to 23S rRNA; its binding is stimulated by other ribosomal proteins, e.g. L4, L17, and L20. It is important during the early stages of 50S assembly. It makes multiple contacts with different domains of the 23S rRNA in the assembled 50S subunit and ribosome. Functionally, the globular domain of the protein is located near the polypeptide exit tunnel on the outside of the subunit, while an extended beta-hairpin is found that lines the wall of the exit tunnel in the center of the 70S ribosome. The protein is Large ribosomal subunit protein uL22 of Sorangium cellulosum (strain So ce56) (Polyangium cellulosum (strain So ce56)).